We begin with the raw amino-acid sequence, 140 residues long: Profilin-2 (140 aa).

An N-acetylalanine modification is found at Ala-2.

Belongs to the profilin family. As to quaternary structure, occurs in many kinds of cells as a complex with monomeric actin in a 1:1 ratio. Interacts with PFN2. Interacts with ACTMAP (via N-terminus); the interaction may facilitate efficient cleavage of the acetylated N-terminus of immature actin by ACTMAP.

It is found in the cytoplasm. It localises to the cytoskeleton. In terms of biological role, binds to actin and affects the structure of the cytoskeleton. At high concentrations, profilin prevents the polymerization of actin, whereas it enhances it at low concentrations. By binding to PIP2, it inhibits the formation of IP3 and DG. This is Profilin-2 (Pfn2) from Rattus norvegicus (Rat).